Consider the following 280-residue polypeptide: Transcription factor HES-1 (280 aa).

The tract at residues 1 to 44 (MPADIMEKNSSSPVAATPASVNTTPDKPKTASEHRKSSKPIMEK) is disordered. The segment covering 10–21 (SSSPVAATPASV) has biased composition (low complexity). A compositionally biased stretch (basic and acidic residues) spans 26-35 (DKPKTASEHR). A bHLH domain is found at 34-91 (HRKSSKPIMEKRRRARINESLSQLKTLILDALKKDSSRHSKLEKADILEMTVKHLRNL). Residues 110–143 (YRAGFSECMNEVTRFLSTCEGVNTEVRTRLLGHL) enclose the Orange domain. Disordered stretches follow at residues 157–200 (GQPH…PPGG) and 254–280 (TSVG…PWRN). Composition is skewed to pro residues over residues 164–174 (QAPPPPPPGPG) and 181–200 (FAPP…PPGG). Residues 254 to 271 (TSVGPNAVSPSSGPSLTA) are compositionally biased toward polar residues. Positions 275-278 (WRPW) match the WRPW motif motif.

As to quaternary structure, transcription repression requires formation of a complex with a corepressor protein of the Groucho/TLE family. Interacts with SIRT1. Interacts (via WPRW motif) with TLE1, and more weakly with TLE2. Interacts with HES6. Interacts with an FA complex, composed of FANCA, FANCF, FANCG and FANCL, but not of FANCC, nor FANCE.

Its subcellular location is the nucleus. In terms of biological role, transcriptional repressor of genes that require a bHLH protein for their transcription. May act as a negative regulator of myogenesis by inhibiting the functions of MYOD1 and ASH1. Binds DNA on N-box motifs: 5'-CACNAG-3' with high affinity and on E-box motifs: 5'-CANNTG-3' with low affinity. May play a role in a functional FA core complex response to DNA cross-link damage, being required for the stability and nuclear localization of FA core complex proteins, as well as for FANCD2 monoubiquitination in response to DNA damage. This Bos taurus (Bovine) protein is Transcription factor HES-1 (HES1).